Consider the following 396-residue polypeptide: Elongation factor Tu (396 aa).

The region spanning 10 to 206 is the tr-type G domain; it reads KPHCNIGTIG…AVDAYIPQPE (197 aa). Residues 19–26 form a G1 region; it reads GHVDHGKT. 19–26 is a GTP binding site; it reads GHVDHGKT. Residue threonine 26 participates in Mg(2+) binding. The segment at 60–64 is G2; that stretch reads GITIS. Positions 81–84 are G3; that stretch reads DCPG. GTP is bound by residues 81–85 and 136–139; these read DCPGH and NKCD. The tract at residues 136–139 is G4; that stretch reads NKCD. The segment at 174 to 176 is G5; sequence SAL.

This sequence belongs to the TRAFAC class translation factor GTPase superfamily. Classic translation factor GTPase family. EF-Tu/EF-1A subfamily. Monomer.

Its subcellular location is the cytoplasm. It catalyses the reaction GTP + H2O = GDP + phosphate + H(+). GTP hydrolase that promotes the GTP-dependent binding of aminoacyl-tRNA to the A-site of ribosomes during protein biosynthesis. The sequence is that of Elongation factor Tu from Nitrobacter winogradskyi (strain ATCC 25391 / DSM 10237 / CIP 104748 / NCIMB 11846 / Nb-255).